The following is a 218-amino-acid chain: GTP cyclohydrolase 1 (218 aa).

Zn(2+) is bound by residues cysteine 107, histidine 110, and cysteine 178.

Belongs to the GTP cyclohydrolase I family. In terms of assembly, homomer.

It catalyses the reaction GTP + H2O = 7,8-dihydroneopterin 3'-triphosphate + formate + H(+). It functions in the pathway cofactor biosynthesis; 7,8-dihydroneopterin triphosphate biosynthesis; 7,8-dihydroneopterin triphosphate from GTP: step 1/1. The chain is GTP cyclohydrolase 1 from Azorhizobium caulinodans (strain ATCC 43989 / DSM 5975 / JCM 20966 / LMG 6465 / NBRC 14845 / NCIMB 13405 / ORS 571).